We begin with the raw amino-acid sequence, 470 residues long: Light-independent protochlorophyllide reductase subunit N (470 aa).

[4Fe-4S] cluster-binding residues include Cys-22, Cys-47, and Cys-107.

It belongs to the BchN/ChlN family. As to quaternary structure, protochlorophyllide reductase is composed of three subunits; ChlL, ChlN and ChlB. Forms a heterotetramer of two ChlB and two ChlN subunits. Requires [4Fe-4S] cluster as cofactor.

The protein localises to the plastid. It is found in the chloroplast. It catalyses the reaction chlorophyllide a + oxidized 2[4Fe-4S]-[ferredoxin] + 2 ADP + 2 phosphate = protochlorophyllide a + reduced 2[4Fe-4S]-[ferredoxin] + 2 ATP + 2 H2O. It functions in the pathway porphyrin-containing compound metabolism; chlorophyll biosynthesis (light-independent). Its function is as follows. Component of the dark-operative protochlorophyllide reductase (DPOR) that uses Mg-ATP and reduced ferredoxin to reduce ring D of protochlorophyllide (Pchlide) to form chlorophyllide a (Chlide). This reaction is light-independent. The NB-protein (ChlN-ChlB) is the catalytic component of the complex. This is Light-independent protochlorophyllide reductase subunit N from Pinus koraiensis (Korean pine).